A 117-amino-acid polypeptide reads, in one-letter code: Large ribosomal subunit protein uL18 (117 aa).

It belongs to the universal ribosomal protein uL18 family. Part of the 50S ribosomal subunit; part of the 5S rRNA/L5/L18/L25 subcomplex. Contacts the 5S and 23S rRNAs.

This is one of the proteins that bind and probably mediate the attachment of the 5S RNA into the large ribosomal subunit, where it forms part of the central protuberance. The sequence is that of Large ribosomal subunit protein uL18 from Laribacter hongkongensis (strain HLHK9).